The chain runs to 210 residues: Somatotropin (210 aa).

An N-terminal signal peptide occupies residues 1–22 (MGQVFLLMPVLLVSCFLSQGAA). A Zn(2+)-binding site is contributed by H38. Residues C71 and C183 are joined by a disulfide bond. E192 provides a ligand contact to Zn(2+). A disulfide bond links C200 and C208.

It belongs to the somatotropin/prolactin family.

The protein localises to the secreted. Functionally, growth hormone plays an important role in growth control and is involved in the regulation of several anabolic processes. Implicated as an osmoregulatory substance important for seawater adaptation. In Oncorhynchus kisutch (Coho salmon), this protein is Somatotropin (gh).